The following is a 333-amino-acid chain: Glycerol-3-phosphate dehydrogenase [NAD(P)+] (333 aa).

Residues tryptophan 13, lysine 33, and lysine 108 each coordinate NADPH. Lysine 108 and glycine 138 together coordinate sn-glycerol 3-phosphate. Serine 142 is a binding site for NADPH. Positions 193, 246, 256, 257, and 258 each coordinate sn-glycerol 3-phosphate. Residue lysine 193 is the Proton acceptor of the active site. Residue arginine 257 participates in NADPH binding. Residues valine 281 and glutamate 283 each coordinate NADPH.

This sequence belongs to the NAD-dependent glycerol-3-phosphate dehydrogenase family.

It is found in the cytoplasm. It catalyses the reaction sn-glycerol 3-phosphate + NAD(+) = dihydroxyacetone phosphate + NADH + H(+). The enzyme catalyses sn-glycerol 3-phosphate + NADP(+) = dihydroxyacetone phosphate + NADPH + H(+). The protein operates within membrane lipid metabolism; glycerophospholipid metabolism. Functionally, catalyzes the reduction of the glycolytic intermediate dihydroxyacetone phosphate (DHAP) to sn-glycerol 3-phosphate (G3P), the key precursor for phospholipid synthesis. This chain is Glycerol-3-phosphate dehydrogenase [NAD(P)+], found in Bifidobacterium longum subsp. infantis (strain ATCC 15697 / DSM 20088 / JCM 1222 / NCTC 11817 / S12).